A 1232-amino-acid polypeptide reads, in one-letter code: Pyruvate:ferredoxin oxidoreductase (1232 aa).

Position 31 (threonine 31) interacts with pyruvate. Position 64 (glutamate 64) interacts with thiamine diphosphate. Arginine 114 is a binding site for pyruvate. CoA contacts are provided by residues alanine 427–valine 431, lysine 459, asparagine 560, and asparagine 602. 4Fe-4S ferredoxin-type domains are found at residues asparagine 680–alanine 709 and phenylalanine 736–leucine 767. Positions 689, 692, 695, 699, 745, 748, 751, 755, 812, and 815 each coordinate [4Fe-4S] cluster. Residues glutamate 817, cysteine 840, and glycine 962 to tryptophan 965 each bind thiamine diphosphate. Residue cysteine 840 coordinates [4Fe-4S] cluster. A Mg(2+)-binding site is contributed by aspartate 963. Ca(2+) is bound by residues aspartate 983 and asparagine 985. Mg(2+) contacts are provided by threonine 991 and valine 993. Threonine 991–asparagine 996 serves as a coordination point for thiamine diphosphate. Alanine 1056, phenylalanine 1059, glycine 1061, and serine 1063 together coordinate Ca(2+). Cysteine 1071 contributes to the [4Fe-4S] cluster binding site. Cysteine 1195 and cysteine 1212 are disulfide-bonded. The interval arginine 1197–lysine 1232 is disordered. Over residues arginine 1216 to aspartate 1225 the composition is skewed to polar residues.

Belongs to the pyruvate:ferredoxin/flavodoxin oxidoreductase family. In terms of assembly, homodimer. Requires [4Fe-4S] cluster as cofactor. It depends on thiamine diphosphate as a cofactor. Mg(2+) is required as a cofactor.

Its subcellular location is the cytoplasm. It carries out the reaction 2 oxidized [2Fe-2S]-[ferredoxin] + pyruvate + CoA = 2 reduced [2Fe-2S]-[ferredoxin] + acetyl-CoA + CO2 + H(+). Functionally, catalyzes the ferredoxin-dependent oxidative decarboxylation of pyruvate. Required for the transfer of electrons from pyruvate to ferredoxin. Ferredoxin I and ferredoxin II, which are single 4Fe-4S cluster ferredoxins are the most effective electron carriers of POR. This chain is Pyruvate:ferredoxin oxidoreductase, found in Desulfocurvibacter africanus (Desulfovibrio africanus).